The following is a 91-amino-acid chain: MARVTVQDAVEKIGNRFDLVLVAARRARQMQVGGKDPLVPEENDKSTVIALREIEEGLITNQILDVRDRQEQHEQEAAELQAVTAIAEGRR.

This sequence belongs to the RNA polymerase subunit omega family. The RNAP catalytic core consists of 2 alpha, 1 beta, 1 beta' and 1 omega subunit. When a sigma factor is associated with the core the holoenzyme is formed, which can initiate transcription.

It catalyses the reaction RNA(n) + a ribonucleoside 5'-triphosphate = RNA(n+1) + diphosphate. Its function is as follows. Promotes RNA polymerase assembly. Latches the N- and C-terminal regions of the beta' subunit thereby facilitating its interaction with the beta and alpha subunits. The protein is DNA-directed RNA polymerase subunit omega of Erwinia tasmaniensis (strain DSM 17950 / CFBP 7177 / CIP 109463 / NCPPB 4357 / Et1/99).